We begin with the raw amino-acid sequence, 281 residues long: Sulfur carrier protein FdhD (281 aa).

Cys127 functions as the Cysteine persulfide intermediate in the catalytic mechanism. 264 to 269 (FAREGR) is a Mo-bis(molybdopterin guanine dinucleotide) binding site.

The protein belongs to the FdhD family.

Its subcellular location is the cytoplasm. In terms of biological role, required for formate dehydrogenase (FDH) activity. Acts as a sulfur carrier protein that transfers sulfur from IscS to the molybdenum cofactor prior to its insertion into FDH. The chain is Sulfur carrier protein FdhD from Mannheimia succiniciproducens (strain KCTC 0769BP / MBEL55E).